The chain runs to 199 residues: GTP-binding protein Di-Ras2 (199 aa).

GTP is bound by residues 14 to 21 (GAGGVGKS), 33 to 39 (RESYIPT), 61 to 65 (DTTGS), and 121 to 124 (NKCD). Serine 35 bears the Phosphoserine mark. The Effector region motif lies at 36–44 (YIPTVEDTY). Serine 126 carries the phosphoserine modification. A GTP-binding site is contributed by 152–153 (AK). Cysteine 196 is modified (cysteine methyl ester). Cysteine 196 is lipidated: S-geranylgeranyl cysteine. Residues 197–199 (VIM) constitute a propeptide, removed in mature form.

Belongs to the small GTPase superfamily. Di-Ras family. Post-translationally, ubiquitinated by the ECS(ASB11) complex via 'Lys-11'-linked ubiquitin chains, leading to its degradation by the proteasome.

The protein localises to the cell membrane. It carries out the reaction GTP + H2O = GDP + phosphate + H(+). Its function is as follows. Displays low GTPase activity and exists predominantly in the GTP-bound form. This chain is GTP-binding protein Di-Ras2 (DIRAS2), found in Macaca fascicularis (Crab-eating macaque).